The chain runs to 79 residues: ESX secretion system protein YukD (79 aa).

The protein belongs to the EsaB family.

Required for YukE secretion. Probable component or regulator of the ESX/ESAT-6-like secretion system (BsEss). In Bacillus subtilis (strain 168), this protein is ESX secretion system protein YukD (yukD).